The chain runs to 623 residues: V-type proton ATPase catalytic subunit A (623 aa).

Position 252–259 (252–259) interacts with ATP; it reads GAFGCGKT.

The protein belongs to the ATPase alpha/beta chains family. V-ATPase is a heteromultimeric enzyme composed of a peripheral catalytic V1 complex (components A to H) attached to an integral membrane V0 proton pore complex (components: a, c, c'', d and e). Binds to the deubiquitinating enzyme AMSH3.

Its subcellular location is the vacuole membrane. It carries out the reaction ATP + H2O + 4 H(+)(in) = ADP + phosphate + 5 H(+)(out). Functionally, catalytic subunit of the peripheral V1 complex of vacuolar ATPase. V-ATPase vacuolar ATPase is responsible for acidifying a variety of intracellular compartments in eukaryotic cells. In Arabidopsis thaliana (Mouse-ear cress), this protein is V-type proton ATPase catalytic subunit A (VHA-A).